A 777-amino-acid chain; its full sequence is Subtilisin-like protease SBT3.7 (777 aa).

The first 22 residues, 1–22, serve as a signal peptide directing secretion; the sequence is MRNHRTSIFVVLSLVIILNGQS. Residues 23–113 constitute a propeptide, activation peptide; it reads GFLPRAGAES…VIPDRFYKPA (91 aa). In terms of domain architecture, Inhibitor I9 spans 34–111; the sequence is VHIVYLGEKQ…VHVIPDRFYK (78 aa). The 508-residue stretch at 117-624 folds into the Peptidase S8 domain; that stretch reads TWDYLGLSPT…GGLVNPEKAT (508 aa). Asparagine 133 is a glycosylation site (N-linked (GlcNAc...) asparagine). Aspartate 147 acts as the Charge relay system in catalysis. Residues asparagine 180 and asparagine 206 are each glycosylated (N-linked (GlcNAc...) asparagine). Catalysis depends on histidine 222, which acts as the Charge relay system. 4 N-linked (GlcNAc...) asparagine glycosylation sites follow: asparagine 237, asparagine 397, asparagine 412, and asparagine 540. Residues 386–481 enclose the PA domain; sequence SLVYPENPGN…ELGTYILFYI (96 aa). Serine 555 serves as the catalytic Charge relay system. Residues asparagine 647, asparagine 723, and asparagine 758 are each glycosylated (N-linked (GlcNAc...) asparagine).

This sequence belongs to the peptidase S8 family.

It is found in the secreted. The polypeptide is Subtilisin-like protease SBT3.7 (Arabidopsis thaliana (Mouse-ear cress)).